Reading from the N-terminus, the 907-residue chain is Leucine-rich repeat-containing G-protein coupled receptor 5 (907 aa).

A signal peptide spans M1–A21. Topologically, residues G22–R561 are extracellular. The LRRNT domain occupies P25–V66. Cystine bridges form between C34–C40 and C38–C52. N63 and N77 each carry an N-linked (GlcNAc...) asparagine glycan. 16 LRR repeats span residues F67 to R88, F91 to G112, S115 to N136, S139 to G160, S163 to S184, A187 to N208, S211 to G232, S235 to L256, N258 to G279, S282 to H303, E306 to T325, T329 to Q350, N353 to Q374, K375 to Q396, N399 to T420, and S423 to T446. Residue N208 is glycosylated (N-linked (GlcNAc...) asparagine). The cysteines at positions 348 and 373 are disulfide-linked. C479 and C541 form a disulfide bridge. A helical transmembrane segment spans residues I562–V582. Residues F583–K593 lie on the Cytoplasmic side of the membrane. Residues L594–A614 form a helical membrane-spanning segment. At A615 to Q638 the chain is on the extracellular side. Cysteines 637 and 712 form a disulfide. A helical transmembrane segment spans residues I639–A659. Topologically, residues L660–R682 are cytoplasmic. A helical membrane pass occupies residues A683–G703. The Extracellular portion of the chain corresponds to S704 to T723. Residues G724–Y744 traverse the membrane as a helical segment. Residues T745–H767 lie on the Cytoplasmic side of the membrane. A helical transmembrane segment spans residues I768–S788. The Extracellular portion of the chain corresponds to S789 to K802. An N-linked (GlcNAc...) asparagine glycan is attached at N792. A helical transmembrane segment spans residues F803–F823. Topologically, residues N824–L907 are cytoplasmic.

The protein belongs to the G-protein coupled receptor 1 family. As to quaternary structure, identified in a complex composed of RNF43, LGR5 and RSPO1. Also interacts with other R-spondin ligands, including RSPO2, RSPO3 and RSPO4. In terms of tissue distribution, expressed in the intestinal epithelium (at protein level). Expressed in the gonads, the adrenal gland, and in the brain. In the central nervous system expression is restricted to the olfactory bulb. In the adrenal gland detected only in the neural-crest derived chromaffin cells of the medulla, but not in the cells of the adrenal cortex. In the gonads, the expression is high in Graafian follicle, but absent from primary and secondary follicles. In the intestine, exclusively expressed in cycling crypt base columnar cells. Expressed in the lower bulge and secondary germ area of telogen hair follicles and in the lower outer root sheath of anagen hair follicle.

It is found in the cell membrane. Its subcellular location is the golgi apparatus. The protein localises to the trans-Golgi network membrane. Functionally, receptor for R-spondins that potentiates the canonical Wnt signaling pathway and acts as a stem cell marker of the intestinal epithelium and the hair follicle. Upon binding to R-spondins (RSPO1, RSPO2, RSPO3 or RSPO4), associates with phosphorylated LRP6 and frizzled receptors that are activated by extracellular Wnt receptors, triggering the canonical Wnt signaling pathway to increase expression of target genes. In contrast to classical G-protein coupled receptors, does not activate heterotrimeric G-proteins to transduce the signal. Involved in the development and/or maintenance of the adult intestinal stem cells during postembryonic development. The chain is Leucine-rich repeat-containing G-protein coupled receptor 5 (Lgr5) from Mus musculus (Mouse).